Reading from the N-terminus, the 341-residue chain is uncharacterized protein (341 aa).

This is an uncharacterized protein from Treponema pallidum (strain Nichols).